We begin with the raw amino-acid sequence, 254 residues long: UPF0246 protein CPF_2407 (254 aa).

This sequence belongs to the UPF0246 family.

The chain is UPF0246 protein CPF_2407 from Clostridium perfringens (strain ATCC 13124 / DSM 756 / JCM 1290 / NCIMB 6125 / NCTC 8237 / Type A).